The primary structure comprises 229 residues: Prolactin (229 aa).

The signal sequence occupies residues 1-30; the sequence is MDKKGWSLKGSLLPLLLLVSDLLLCQSVAS. C34 and C41 form a disulfide bridge. A phosphoserine mark is found at S56, S64, and S120. Intrachain disulfides connect C88-C204 and C221-C229.

It belongs to the somatotropin/prolactin family. In terms of assembly, interacts with PRLR.

It is found in the secreted. Its function is as follows. Prolactin acts primarily on the mammary gland by promoting lactation. This is Prolactin (PRL) from Ailuropoda melanoleuca (Giant panda).